Reading from the N-terminus, the 96-residue chain is Pterin-4-alpha-carbinolamine dehydratase (96 aa).

It belongs to the pterin-4-alpha-carbinolamine dehydratase family.

Its subcellular location is the spore wall. It carries out the reaction (4aS,6R)-4a-hydroxy-L-erythro-5,6,7,8-tetrahydrobiopterin = (6R)-L-erythro-6,7-dihydrobiopterin + H2O. In terms of biological role, has a role in spore wall formation. In Schizosaccharomyces pombe (strain 972 / ATCC 24843) (Fission yeast), this protein is Pterin-4-alpha-carbinolamine dehydratase (omt2).